Reading from the N-terminus, the 361-residue chain is tRNA-specific 2-thiouridylase MnmA (361 aa).

ATP contacts are provided by residues 6 to 13 and leucine 32; that span reads AMSGGVDS. The active-site Nucleophile is the cysteine 99. Cysteine 99 and cysteine 196 are joined by a disulfide. Residue glycine 123 coordinates ATP. The interaction with tRNA stretch occupies residues 145–147; the sequence is RDQ. Cysteine 196 (cysteine persulfide intermediate) is an active-site residue.

It belongs to the MnmA/TRMU family.

It is found in the cytoplasm. It carries out the reaction S-sulfanyl-L-cysteinyl-[protein] + uridine(34) in tRNA + AH2 + ATP = 2-thiouridine(34) in tRNA + L-cysteinyl-[protein] + A + AMP + diphosphate + H(+). Functionally, catalyzes the 2-thiolation of uridine at the wobble position (U34) of tRNA, leading to the formation of s(2)U34. This Gluconobacter oxydans (strain 621H) (Gluconobacter suboxydans) protein is tRNA-specific 2-thiouridylase MnmA.